The sequence spans 538 residues: Zinc finger protein with KRAB and SCAN domains 3 (538 aa).

The residue at position 42 (S42) is a Phosphoserine. The 83-residue stretch at 46 to 128 (RERFRGFRYP…VLLEYLERQL (83 aa)) folds into the SCAN box domain. Residue K171 forms a Glycyl lysine isopeptide (Lys-Gly) (interchain with G-Cter in SUMO2) linkage. T207 bears the Phosphothreonine mark. Residues 214–274 (LKVEDVALTL…PAEELPEKEH (61 aa)) enclose the KRAB domain. The segment covering 226–236 (EWTQQDSSQGN) has biased composition (polar residues). The disordered stretch occupies residues 226–274 (EWTQQDSSQGNLCRDEKQENHGSLVSLGDEKQTKSRDLPPAEELPEKEH). Residues 253-274 (GDEKQTKSRDLPPAEELPEKEH) are compositionally biased toward basic and acidic residues. C2H2-type zinc fingers lie at residues 314-336 (HICHECGKSFAQSSGLSKHRRIH), 342-364 (YECEECGKAFIGSSALVIHQRVH), 370-392 (YECEECGKAFSHSSDLIKHQRTH), 398-420 (YECDDCGKTFSQSCSLLEHHRIH), and 426-448 (YQCSMCGKAFRRSSHLLRHQRIH). Phosphothreonine is present on T449. C2H2-type zinc fingers lie at residues 480–502 (YKCNECERSFTQNTGLIEHQKIH) and 508–530 (YQCNACGKGFTRISYLVQHQRSH).

The protein belongs to the krueppel C2H2-type zinc-finger protein family.

It localises to the nucleus. It is found in the cytoplasm. Transcriptional factor that binds to the consensus sequence 5'-[GT][AG][AGT]GGGG-3' and acts as a repressor of autophagy. Specifically represses expression of genes involved in autophagy and lysosome biogenesis/function such as MAP1LC3B, ULK1 or WIPI2. Associates with chromatin at the ITGB4 and VEGF promoters. Also acts as a transcription activator and promotes cancer cell progression and/or migration in various tumors and myelomas. The sequence is that of Zinc finger protein with KRAB and SCAN domains 3 (ZKSCAN3) from Homo sapiens (Human).